The chain runs to 91 residues: Large ribosomal subunit protein uL23c (91 aa).

The protein belongs to the universal ribosomal protein uL23 family. Part of the 50S ribosomal subunit.

The protein localises to the plastid. Its subcellular location is the chloroplast. In terms of biological role, binds to 23S rRNA. This Pinus koraiensis (Korean pine) protein is Large ribosomal subunit protein uL23c (rpl23).